The following is a 215-amino-acid chain: Protein-L-isoaspartate O-methyltransferase 1 (215 aa).

Residue S61 is part of the active site.

Belongs to the methyltransferase superfamily. L-isoaspartyl/D-aspartyl protein methyltransferase family.

Its subcellular location is the cytoplasm. It carries out the reaction [protein]-L-isoaspartate + S-adenosyl-L-methionine = [protein]-L-isoaspartate alpha-methyl ester + S-adenosyl-L-homocysteine. Its function is as follows. Catalyzes the methyl esterification of L-isoaspartyl residues in peptides and proteins that result from spontaneous decomposition of normal L-aspartyl and L-asparaginyl residues. It plays a role in the repair and/or degradation of damaged proteins. This Pelobacter propionicus (strain DSM 2379 / NBRC 103807 / OttBd1) protein is Protein-L-isoaspartate O-methyltransferase 1.